The chain runs to 55 residues: MASSTDVRPKITLACEVCKHRNYITKKNRRNDPDRLELKKFCPNCGKHQAHRETR.

This sequence belongs to the bacterial ribosomal protein bL33 family.

This Mycobacterium tuberculosis (strain CDC 1551 / Oshkosh) protein is Large ribosomal subunit protein bL33B (rpmG2).